The chain runs to 305 residues: Ribonuclease BN (305 aa).

Residues His64, His66, Asp68, His69, His141, Asp212, and His270 each coordinate Zn(2+). Asp68 acts as the Proton acceptor in catalysis.

This sequence belongs to the RNase Z family. RNase BN subfamily. As to quaternary structure, homodimer. It depends on Zn(2+) as a cofactor.

In terms of biological role, zinc phosphodiesterase, which has both exoribonuclease and endoribonuclease activities. The chain is Ribonuclease BN from Salmonella agona (strain SL483).